The sequence spans 106 residues: Integration host factor subunit alpha (106 aa).

The protein belongs to the bacterial histone-like protein family. In terms of assembly, heterodimer of an alpha and a beta chain.

This protein is one of the two subunits of integration host factor, a specific DNA-binding protein that functions in genetic recombination as well as in transcriptional and translational control. In Methylobacterium radiotolerans (strain ATCC 27329 / DSM 1819 / JCM 2831 / NBRC 15690 / NCIMB 10815 / 0-1), this protein is Integration host factor subunit alpha.